A 422-amino-acid chain; its full sequence is WD repeat and SOCS box-containing protein 1 (422 aa).

WD repeat units follow at residues 124–165 (SRCV…LLLN), 168–208 (DHTE…NMMK), 212–251 (GHQN…MIRK), 254–293 (GHYN…ILFE), and 309–346 (DNGR…SYPV). The region spanning 374-422 (NAYFWSTPKYVSSLQHLCRMAIRRVMNTNEVKKLPIPQKIMEFLTYQTM) is the SOCS box domain.

As to quaternary structure, component of a probable ECS E3 ubiquitin-protein ligase complex that contains the Elongin BC complex.

It participates in protein modification; protein ubiquitination. Probable substrate-recognition component of a SCF-like ECS (Elongin-Cullin-SOCS-box protein) E3 ubiquitin-protein ligase complex which mediates the ubiquitination and subsequent proteasomal degradation of target proteins. The protein is WD repeat and SOCS box-containing protein 1 (wsb1) of Xenopus tropicalis (Western clawed frog).